The sequence spans 419 residues: Putative competence-damage inducible protein (419 aa).

It belongs to the CinA family.

The protein is Putative competence-damage inducible protein of Streptococcus agalactiae serotype III (strain NEM316).